We begin with the raw amino-acid sequence, 281 residues long: 2,3,4,5-tetrahydropyridine-2,6-dicarboxylate N-succinyltransferase (281 aa).

2 residues coordinate substrate: arginine 108 and aspartate 145.

The protein belongs to the transferase hexapeptide repeat family. Homotrimer.

It is found in the cytoplasm. The catalysed reaction is (S)-2,3,4,5-tetrahydrodipicolinate + succinyl-CoA + H2O = (S)-2-succinylamino-6-oxoheptanedioate + CoA. It participates in amino-acid biosynthesis; L-lysine biosynthesis via DAP pathway; LL-2,6-diaminopimelate from (S)-tetrahydrodipicolinate (succinylase route): step 1/3. The chain is 2,3,4,5-tetrahydropyridine-2,6-dicarboxylate N-succinyltransferase from Nitrobacter winogradskyi (strain ATCC 25391 / DSM 10237 / CIP 104748 / NCIMB 11846 / Nb-255).